Consider the following 309-residue polypeptide: THAP domain-containing protein 7 (309 aa).

A THAP-type zinc finger spans residues 1–93 (MPRHCSAAGC…LKEGAVPTIF (93 aa)). Position 162 is a phosphoserine (S162). The interval 176–210 (SDLLGPLGAQADEAGCSTQPSPEQHPSPLEPQPAS) is disordered. The span at 198-209 (EQHPSPLEPQPA) shows a compositional bias: pro residues. The residue at position 210 (S210) is a Phosphoserine. An HCFC1-binding motif (HBM) motif is present at residues 229 to 232 (EHSY).

In terms of assembly, forms homodimers. Interacts with HDAC3 and nuclear hormone receptor corepressors. Interacts via HBM with HCFC1.

It localises to the nucleus. The protein localises to the chromosome. In terms of biological role, chromatin-associated, histone tail-binding protein that represses transcription via recruitment of HDAC3 and nuclear hormone receptor corepressors. This Mus musculus (Mouse) protein is THAP domain-containing protein 7 (Thap7).